A 246-amino-acid polypeptide reads, in one-letter code: Ribonuclease 3 (246 aa).

An RNase III domain is found at 8-137 (ANRLKTRLGF…LLGAIYLDQG (130 aa)). Residue Glu50 participates in Mg(2+) binding. The active site involves Asp54. Residues Asp123 and Glu126 each contribute to the Mg(2+) site. Glu126 is an active-site residue. One can recognise a DRBM domain in the interval 164–233 (DYKTELQEIL…AKDAFQHLEG (70 aa)). The segment at 212 to 246 (SGHSKKEAEQQAAKDAFQHLEGMGKSGHKSAGPIR) is disordered.

Belongs to the ribonuclease III family. In terms of assembly, homodimer. The cofactor is Mg(2+).

It localises to the cytoplasm. It catalyses the reaction Endonucleolytic cleavage to 5'-phosphomonoester.. Functionally, digests double-stranded RNA. Involved in the processing of primary rRNA transcript to yield the immediate precursors to the large and small rRNAs (23S and 16S). Processes some mRNAs, and tRNAs when they are encoded in the rRNA operon. Processes pre-crRNA and tracrRNA of type II CRISPR loci if present in the organism. The polypeptide is Ribonuclease 3 (Desulforamulus reducens (strain ATCC BAA-1160 / DSM 100696 / MI-1) (Desulfotomaculum reducens)).